Reading from the N-terminus, the 1142-residue chain is Error-prone DNA polymerase (1142 aa).

The interval 291–361 (TSSPAQAARE…GTGAAAGTDR (71 aa)) is disordered. Low complexity-rich tracts occupy residues 311–320 (LRASLPAERP) and 327–344 (GPAA…PGEP). Over residues 345–355 (GLAGAGGGTGA) the composition is skewed to gly residues.

This sequence belongs to the DNA polymerase type-C family. DnaE2 subfamily.

The protein resides in the cytoplasm. The enzyme catalyses DNA(n) + a 2'-deoxyribonucleoside 5'-triphosphate = DNA(n+1) + diphosphate. In terms of biological role, DNA polymerase involved in damage-induced mutagenesis and translesion synthesis (TLS). It is not the major replicative DNA polymerase. The polypeptide is Error-prone DNA polymerase (Anaeromyxobacter dehalogenans (strain 2CP-1 / ATCC BAA-258)).